The sequence spans 696 residues: Iron-sulfur clusters transporter ATM1, mitochondrial (696 aa).

Residues 1-67 (MIKWGLFGAV…RFFSSSHKLG (67 aa)) constitute a mitochondrion transit peptide. Residues 68-109 (VNTKEDSSTYLFGRKISTSESKMLKSLLVTIWPKNKPSFKLR) lie on the Mitochondrial matrix side of the membrane. A helical membrane pass occupies residues 110–131 (VIFALSLLIASKLLNVEVPFFF). In terms of domain architecture, ABC transmembrane type-1 spans 110 to 400 (VIFALSLLIA…LGSVYRELKQ (291 aa)). At 132 to 154 (KKIIDEMNVDWNDQLGTVGTVIG) the chain is on the mitochondrial intermembrane side. Residues 155 to 178 (TLIIAYGGARFGAVLFGELRNAVF) traverse the membrane as a helical segment. At 179-227 (ASVAQTAIKRVAHNTFVHLLNMDLNFHLSRQTGGLTRAIDRGTKGISYV) the chain is on the mitochondrial matrix side. A helical transmembrane segment spans residues 228-251 (LNAMVFHIIPISFEISMVCGILIY). Position 252 (Asn-252) is a topological domain, mitochondrial intermembrane. A helical membrane pass occupies residues 253–273 (YGLSFAAVTLATMLSYSVFTI). Over 274–339 (KTTAWRTGFR…ASVKVATSLA (66 aa)) the chain is Mitochondrial matrix. Residues 279–283 (RTGFR) and 342–345 (NAGQ) contribute to the glutathione site. Residues 340–358 (YLNAGQNFIFTSALTAMMY) form a helical membrane-spanning segment. The Mitochondrial intermembrane portion of the chain corresponds to 359-373 (MGCNGVATGSLTVGD). The helical transmembrane segment at 374–395 (LVLINQLVFQLSVPLSFLGSVY) threads the bilayer. Position 392 (Gly-392) interacts with glutathione. The Mitochondrial matrix portion of the chain corresponds to 396–696 (RELKQSLLDM…EYAKETEEQK (301 aa)). Residues 438 to 674 (IKFENVTFGY…PNSLYSQLWN (237 aa)) form the ABC transporter domain. Residues Tyr-447 and 471–482 (GPSGSGKSTILR) contribute to the ATP site.

Belongs to the ABC transporter superfamily. ABCB family. Heavy Metal importer (TC 3.A.1.210) subfamily. As to quaternary structure, homodimer.

Its subcellular location is the mitochondrion inner membrane. Functionally, performs an essential function in the generation of cytoplasmic iron-sulfur proteins by mediating the ATP-dependent export of Fe/S cluster precursors synthesized by NFS1 and other mitochondrial proteins. Hydrolyzes ATP. Binds glutathione and may function by transporting a glutathione-conjugated iron-sulfur compound. The chain is Iron-sulfur clusters transporter ATM1, mitochondrial from Debaryomyces hansenii (strain ATCC 36239 / CBS 767 / BCRC 21394 / JCM 1990 / NBRC 0083 / IGC 2968) (Yeast).